A 350-amino-acid chain; its full sequence is Glycerol-1-phosphate dehydrogenase [NAD(P)+] (350 aa).

NAD(+)-binding positions include 94–98 (GKPID) and 116–119 (TVAS). Position 121 (D121) interacts with substrate. S125 contributes to the NAD(+) binding site. Residue D168 coordinates substrate. Positions 168 and 248 each coordinate Zn(2+). Position 252 (H252) interacts with substrate. H264 contributes to the Zn(2+) binding site.

This sequence belongs to the glycerol-1-phosphate dehydrogenase family. Zn(2+) serves as cofactor.

The protein localises to the cytoplasm. It catalyses the reaction sn-glycerol 1-phosphate + NAD(+) = dihydroxyacetone phosphate + NADH + H(+). The enzyme catalyses sn-glycerol 1-phosphate + NADP(+) = dihydroxyacetone phosphate + NADPH + H(+). Its pathway is membrane lipid metabolism; glycerophospholipid metabolism. Catalyzes the NAD(P)H-dependent reduction of dihydroxyacetonephosphate (DHAP or glycerone phosphate) to glycerol 1-phosphate (G1P). The G1P thus generated is used as the glycerophosphate backbone of phospholipids in the cellular membranes of Archaea. In Halorubrum lacusprofundi (strain ATCC 49239 / DSM 5036 / JCM 8891 / ACAM 34), this protein is Glycerol-1-phosphate dehydrogenase [NAD(P)+].